Reading from the N-terminus, the 238-residue chain is Demethylmenaquinone methyltransferase (238 aa).

S-adenosyl-L-methionine contacts are provided by residues Thr65, Asp85, and 109 to 110 (DA).

This sequence belongs to the class I-like SAM-binding methyltransferase superfamily. MenG/UbiE family.

The catalysed reaction is a 2-demethylmenaquinol + S-adenosyl-L-methionine = a menaquinol + S-adenosyl-L-homocysteine + H(+). It participates in quinol/quinone metabolism; menaquinone biosynthesis; menaquinol from 1,4-dihydroxy-2-naphthoate: step 2/2. Functionally, methyltransferase required for the conversion of demethylmenaquinol (DMKH2) to menaquinol (MKH2). In Roseiflexus castenholzii (strain DSM 13941 / HLO8), this protein is Demethylmenaquinone methyltransferase.